A 524-amino-acid chain; its full sequence is Bifunctional purine biosynthesis protein PurH (524 aa).

The MGS-like domain maps to methionine 1–valine 145.

Belongs to the PurH family.

It carries out the reaction (6R)-10-formyltetrahydrofolate + 5-amino-1-(5-phospho-beta-D-ribosyl)imidazole-4-carboxamide = 5-formamido-1-(5-phospho-D-ribosyl)imidazole-4-carboxamide + (6S)-5,6,7,8-tetrahydrofolate. It catalyses the reaction IMP + H2O = 5-formamido-1-(5-phospho-D-ribosyl)imidazole-4-carboxamide. The protein operates within purine metabolism; IMP biosynthesis via de novo pathway; 5-formamido-1-(5-phospho-D-ribosyl)imidazole-4-carboxamide from 5-amino-1-(5-phospho-D-ribosyl)imidazole-4-carboxamide (10-formyl THF route): step 1/1. It functions in the pathway purine metabolism; IMP biosynthesis via de novo pathway; IMP from 5-formamido-1-(5-phospho-D-ribosyl)imidazole-4-carboxamide: step 1/1. The chain is Bifunctional purine biosynthesis protein PurH from Cupriavidus necator (strain ATCC 17699 / DSM 428 / KCTC 22496 / NCIMB 10442 / H16 / Stanier 337) (Ralstonia eutropha).